The primary structure comprises 334 residues: G-protein coupled receptor 12 (334 aa).

At 1-48 (MNEDPKVNLSGLPRDCIDAGAPENISAAVPSQGSVAESEPELVVNPWD) the chain is on the extracellular side. N-linked (GlcNAc...) asparagine glycans are attached at residues N8 and N24. Residues 49 to 69 (IVLCSSGTLICCENAVVVLII) traverse the membrane as a helical segment. Over 70–78 (FHSPSLRAP) the chain is Cytoplasmic. A helical membrane pass occupies residues 79–99 (MFLLIGSLALADLLAGLGLII). Topologically, residues 100 to 113 (NFVFAYLLQSEATK) are extracellular. The chain crosses the membrane as a helical span at residues 114–134 (LVTIGLIVASFSASVCSLLAI). The Cytoplasmic segment spans residues 135–158 (TVDRYLSLYYALTYHSERTVTFTY). A helical membrane pass occupies residues 159 to 179 (VMLVMLWGTSICLGLLPVMGW). The Extracellular portion of the chain corresponds to 180 to 199 (NCLRDESTCSVVRPLTKNNA). The chain crosses the membrane as a helical span at residues 200–220 (AILSISFLFMFALMLQLYIQI). The Cytoplasmic portion of the chain corresponds to 221-252 (CKIVMRHAHQIALQHHFLATSHYVTTRKGVST). The helical transmembrane segment at 253-273 (LALILGTFAACWMPFTLYSLI) threads the bilayer. The Extracellular portion of the chain corresponds to 274–282 (ADYTYPSIY). Residues 283-303 (TYATLLPATYNSIINPVIYAF) form a helical membrane-spanning segment. Over 304–334 (RNQEIQKALCLICCGCIPSSLSQRARSPSDV) the chain is Cytoplasmic. C317 is lipidated: S-palmitoyl cysteine. 2 positions are modified to phosphoserine: S330 and S332.

It belongs to the G-protein coupled receptor 1 family. In terms of tissue distribution, expressed predominantly in the forebrain and a lesser extent in the hindbrain. Lower expression in the liver.

The protein resides in the cell membrane. In terms of biological role, receptor with constitutive G(s) signaling activity that stimulates cyclic AMP production. Promotes neurite outgrowth and blocks myelin inhibition in neurons. This chain is G-protein coupled receptor 12 (Gpr12), found in Mus musculus (Mouse).